Consider the following 143-residue polypeptide: Transcriptional regulator MraZ (143 aa).

2 consecutive SpoVT-AbrB domains span residues 5-47 (EYEH…PRGV) and 76-119 (AADM…SPRR).

The protein belongs to the MraZ family. Forms oligomers.

The protein resides in the cytoplasm. It is found in the nucleoid. This chain is Transcriptional regulator MraZ, found in Roseiflexus castenholzii (strain DSM 13941 / HLO8).